The following is a 234-amino-acid chain: Leucyl/phenylalanyl-tRNA--protein transferase (234 aa).

Belongs to the L/F-transferase family.

The protein localises to the cytoplasm. The catalysed reaction is N-terminal L-lysyl-[protein] + L-leucyl-tRNA(Leu) = N-terminal L-leucyl-L-lysyl-[protein] + tRNA(Leu) + H(+). The enzyme catalyses N-terminal L-arginyl-[protein] + L-leucyl-tRNA(Leu) = N-terminal L-leucyl-L-arginyl-[protein] + tRNA(Leu) + H(+). It carries out the reaction L-phenylalanyl-tRNA(Phe) + an N-terminal L-alpha-aminoacyl-[protein] = an N-terminal L-phenylalanyl-L-alpha-aminoacyl-[protein] + tRNA(Phe). Its function is as follows. Functions in the N-end rule pathway of protein degradation where it conjugates Leu, Phe and, less efficiently, Met from aminoacyl-tRNAs to the N-termini of proteins containing an N-terminal arginine or lysine. This is Leucyl/phenylalanyl-tRNA--protein transferase from Escherichia fergusonii (strain ATCC 35469 / DSM 13698 / CCUG 18766 / IAM 14443 / JCM 21226 / LMG 7866 / NBRC 102419 / NCTC 12128 / CDC 0568-73).